Here is a 259-residue protein sequence, read N- to C-terminus: tRNA pseudouridine synthase A (259 aa).

The active-site Nucleophile is Asp-51. Tyr-109 serves as a coordination point for substrate.

This sequence belongs to the tRNA pseudouridine synthase TruA family. In terms of assembly, homodimer.

The enzyme catalyses uridine(38/39/40) in tRNA = pseudouridine(38/39/40) in tRNA. Its function is as follows. Formation of pseudouridine at positions 38, 39 and 40 in the anticodon stem and loop of transfer RNAs. The sequence is that of tRNA pseudouridine synthase A from Nitrosococcus oceani (strain ATCC 19707 / BCRC 17464 / JCM 30415 / NCIMB 11848 / C-107).